We begin with the raw amino-acid sequence, 376 residues long: Galactoside alpha-(1,2)-fucosyltransferase 1 (376 aa).

The Cytoplasmic segment spans residues 1-12 (MWTPSRKQLCLA). The chain crosses the membrane as a helical; Signal-anchor for type II membrane protein span at residues 13–29 (FLSVCVLSAGSFFFHLN). Residues 30 to 376 (GGNFFQNALT…WETDSLFRLA (347 aa)) are Lumenal-facing. Asn-64, Asn-302, and Asn-328 each carry an N-linked (GlcNAc...) asparagine glycan.

Belongs to the glycosyltransferase 11 family.

It is found in the golgi apparatus. The protein localises to the golgi stack membrane. The enzyme catalyses a beta-D-galactosyl-(1-&gt;4)-N-acetyl-beta-D-glucosaminyl derivative + GDP-beta-L-fucose = an alpha-L-Fuc-(1-&gt;2)-beta-D-Gal-(1-&gt;4)-beta-D-GlcNAc derivative + GDP + H(+). The catalysed reaction is a ganglioside GA1 + GDP-beta-L-fucose = a ganglioside Fuc-GA1 + GDP + H(+). It carries out the reaction a beta-D-Gal-(1-&gt;3)-beta-D-GlcNAc-(1-&gt;3)-beta-D-Gal-(1-&gt;4)-beta-D-Glc-(1&lt;-&gt;1')-Cer(d18:1(4E)) + GDP-beta-L-fucose = alpha-L-fucosyl-(1-&gt;2)- beta-D-galactosyl-(1-&gt;3)-N-acetyl-beta-D-glucosaminyl-(1-&gt;3)-beta-D-galactosyl-(1-&gt;4)-beta-D-glucosyl-(1&lt;-&gt;1')-N-acylsphing-4-enine + GDP + H(+). It catalyses the reaction a neolactoside nLc4Cer(d18:1(4E)) + GDP-beta-L-fucose = a neolactoside IV(2)-alpha-Fuc-nLc4Cer(d18:1(4E)) + GDP + H(+). The enzyme catalyses a ganglioside GM1 + GDP-beta-L-fucose = a ganglioside Fuc-GM1 + GDP + H(+). The catalysed reaction is beta-D-galactosyl-(1-&gt;3)-N-acetyl-D-galactosamine + GDP-beta-L-fucose = alpha-L-fucosyl-(1-&gt;2)-beta-D-galactosyl-(1-&gt;3)-N-acetyl-D-galactosamine + GDP + H(+). It participates in protein modification; protein glycosylation. Catalyzes the transfer of L-fucose, from a guanosine diphosphate-beta-L-fucose, to the terminal galactose residue of glycoconjugates through an alpha(1,2) linkage leading to H antigen synthesis that is an intermediate substrate in the synthesis of ABO blood group antigens. H antigen is essential for maturation of the glomerular layer of the main olfactory bulb, in cell migration and early cell-cell contacts during tumor associated angiogenesis. Preferentially fucosylates soluble lactose and to a lesser extent fucosylates glycolipids gangliosides GA1 and GM1a. The polypeptide is Galactoside alpha-(1,2)-fucosyltransferase 1 (Rattus norvegicus (Rat)).